A 373-amino-acid chain; its full sequence is Eukaryotic translation initiation factor 3 subunit M (373 aa).

Ser-2 is modified (N-acetylserine). 2 positions are modified to phosphoserine: Ser-2 and Ser-152. Positions 180–338 (AASKVMVELL…RKVVVSHSTH (159 aa)) constitute a PCI domain. Lys-253 is subject to N6-acetyllysine. Position 366 is a phosphoserine (Ser-366).

The protein belongs to the eIF-3 subunit M family. In terms of assembly, component of the eukaryotic translation initiation factor 3 (eIF-3) complex, which is composed of 13 subunits: EIF3A, EIF3B, EIF3C, EIF3D, EIF3E, EIF3F, EIF3G, EIF3H, EIF3I, EIF3J, EIF3K, EIF3L and EIF3M. The eIF-3 complex appears to include 3 stable modules: module A is composed of EIF3A, EIF3B, EIF3G and EIF3I; module B is composed of EIF3F, EIF3H, and EIF3M; and module C is composed of EIF3C, EIF3D, EIF3E, EIF3K and EIF3L. EIF3C of module C binds EIF3B of module A and EIF3H of module B, thereby linking the three modules. EIF3J is a labile subunit that binds to the eIF-3 complex via EIF3B. The eIF-3 complex interacts with RPS6KB1 under conditions of nutrient depletion. Mitogenic stimulation leads to binding and activation of a complex composed of MTOR and RPTOR, leading to phosphorylation and release of RPS6KB1 and binding of EIF4B to eIF-3.

It is found in the cytoplasm. Its function is as follows. Component of the eukaryotic translation initiation factor 3 (eIF-3) complex, which is required for several steps in the initiation of protein synthesis. The eIF-3 complex associates with the 40S ribosome and facilitates the recruitment of eIF-1, eIF-1A, eIF-2:GTP:methionyl-tRNAi and eIF-5 to form the 43S pre-initiation complex (43S PIC). The eIF-3 complex stimulates mRNA recruitment to the 43S PIC and scanning of the mRNA for AUG recognition. The eIF-3 complex is also required for disassembly and recycling of post-termination ribosomal complexes and subsequently prevents premature joining of the 40S and 60S ribosomal subunits prior to initiation. The eIF-3 complex specifically targets and initiates translation of a subset of mRNAs involved in cell proliferation, including cell cycling, differentiation and apoptosis, and uses different modes of RNA stem-loop binding to exert either translational activation or repression. This Bos taurus (Bovine) protein is Eukaryotic translation initiation factor 3 subunit M.